Here is an 891-residue protein sequence, read N- to C-terminus: Bifunctional aldehyde-alcohol dehydrogenase AdhE (891 aa).

Residues 2-440 (AVTNVAELNA…ENVGPKHLIN (439 aa)) are aldehyde dehydrogenase. Residues 110–115 (IVPTTN), Gly-195, and Gly-213 each bind NAD(+). The Nucleophile role is filled by Cys-246. NAD(+) contacts are provided by Glu-335 and Leu-419. The linker stretch occupies residues 441 to 448 (KKTVAKRA). The tract at residues 449–891 (ENMLWHKLPK…KAEKKAKKSA (443 aa)) is alcohol dehydrogenase. NAD(+) is bound by residues Asp-487, Asp-519, 546 to 550 (GSPMD), 597 to 598 (TT), Val-610, Lys-619, and Leu-638. Asp-653, His-657, His-723, and His-737 together coordinate Fe cation.

In the N-terminal section; belongs to the aldehyde dehydrogenase family. This sequence in the C-terminal section; belongs to the iron-containing alcohol dehydrogenase family. In terms of assembly, forms long filaments, called spirosomes. Fe(2+) is required as a cofactor.

It catalyses the reaction acetaldehyde + NAD(+) + CoA = acetyl-CoA + NADH + H(+). The catalysed reaction is ethanol + NAD(+) = acetaldehyde + NADH + H(+). The enzyme catalyses a primary alcohol + NAD(+) = an aldehyde + NADH + H(+). In terms of biological role, under fermentative conditions, catalyzes the sequential NADH-dependent reduction of acetyl-CoA to acetaldehyde and then to ethanol. Plays an important role in virulence and is critical for proper regulation of virulence gene expression. This Escherichia coli O157:H7 protein is Bifunctional aldehyde-alcohol dehydrogenase AdhE.